The sequence spans 363 residues: S-adenosylmethionine:tRNA ribosyltransferase-isomerase (363 aa).

It belongs to the QueA family. In terms of assembly, monomer.

It localises to the cytoplasm. It carries out the reaction 7-aminomethyl-7-carbaguanosine(34) in tRNA + S-adenosyl-L-methionine = epoxyqueuosine(34) in tRNA + adenine + L-methionine + 2 H(+). It participates in tRNA modification; tRNA-queuosine biosynthesis. Its function is as follows. Transfers and isomerizes the ribose moiety from AdoMet to the 7-aminomethyl group of 7-deazaguanine (preQ1-tRNA) to give epoxyqueuosine (oQ-tRNA). This is S-adenosylmethionine:tRNA ribosyltransferase-isomerase from Brucella abortus (strain S19).